The following is a 246-amino-acid chain: Transcription factor MYB113 (246 aa).

2 HTH myb-type domains span residues 5 to 61 and 62 to 112; these read PKGL…KPSI and KRGK…SKKH. 2 consecutive DNA-binding regions (H-T-H motif) follow at residues 33–57 and 85–108; these read WHRVPLRTGLNRCRKSCRLRWLNYL and WSLIAGRLPGRTANDVKNYWNTHL.

As to quaternary structure, interacts with BHLH002/EGL3/MYC146, BHLH012/MYC1 and BHLH042/TT8.

Its subcellular location is the nucleus. Transcription activator, when associated with BHLH002/EGL3/MYC146, BHLH012/MYC1, or BHLH042/TT8. This chain is Transcription factor MYB113 (MYB113), found in Arabidopsis thaliana (Mouse-ear cress).